The primary structure comprises 951 residues: Leucine-rich repeat-containing G-protein coupled receptor 4 (951 aa).

The N-terminal stretch at 1–24 (MPGPLRLLCFFALGLLGSAGPSGA) is a signal peptide. Residues 25 to 57 (APPLCAAPCSCDGDRRVDCSGKGLTAVPEGLSA) enclose the LRRNT domain. Residues 25–544 (APPLCAAPCS…LLGSWMIRLT (520 aa)) are Extracellular-facing. 2 cysteine pairs are disulfide-bonded: Cys29-Cys35 and Cys33-Cys43. LRR repeat units lie at residues 58–79 (FTQA…AFKN), 82–103 (FLEE…ALSG), 106–127 (ELKV…AIRG), 130–151 (ALQS…SFEG), 154–177 (QLRH…SNLP), 178–199 (TLQA…AFTN), 202–223 (SLVV…CFDG), 226–247 (NLET…IKAL), 249–270 (SLKE…AFAG), 273–294 (LLRT…AFHN), 320–341 (HLES…LCQN), 344–365 (MLRT…NGCR), 366–387 (ALEE…TFQG), 390–411 (SLRI…AFAK), and 414–435 (TITN…GLNG). A glycan (N-linked (GlcNAc...) asparagine) is linked at Asn68. Residues Asn188 and Asn199 are each glycosylated (N-linked (GlcNAc...) asparagine). N-linked (GlcNAc...) asparagine glycosylation is present at Asn294. Cys339 and Cys364 are joined by a disulfide. 2 disulfide bridges follow: Cys470/Cys522 and Cys471/Cys476. The tract at residues 487-512 (NSPQDHSVTKEKGATDAANATSTAES) is disordered. The span at 501 to 510 (TDAANATSTA) shows a compositional bias: low complexity. N-linked (GlcNAc...) asparagine glycosylation occurs at Asn505. The chain crosses the membrane as a helical span at residues 545 to 565 (VWFIFLVALLFNLLVILTVFA). Over 566–575 (SCSSLPASKL) the chain is Cytoplasmic. The chain crosses the membrane as a helical span at residues 576–596 (FIGLISVSNLLMGIYTGILTF). The Extracellular segment spans residues 597–619 (LDAVSWGRFAEFGIWWETGSGCK). The cysteines at positions 618 and 693 are disulfide-linked. The helical transmembrane segment at 620-640 (VAGSLAVFSSESAVFLLTLAA) threads the bilayer. The Cytoplasmic portion of the chain corresponds to 641 to 661 (VERSVFAKDVMKNGKSSHLRQ). Residues 662-682 (FQVAALVALLGAAIAGCFPLF) form a helical membrane-spanning segment. At 683–703 (HGGQYSASPLCLPFPTGETPS) the chain is on the extracellular side. Residues 704–724 (LGFTVTLVLLNSLAFLLMAII) form a helical membrane-spanning segment. Topologically, residues 725 to 756 (YTKLYCNLEKEDPSENSQSSMIKHVAWLIFTN) are cytoplasmic. A helical transmembrane segment spans residues 757–777 (CIFFCPVAFFSFAPLITAISI). Residues 778–783 (SPEIMK) lie on the Extracellular side of the membrane. A helical membrane pass occupies residues 784 to 804 (SVTLIFFPLPACLNPVLYVFF). Residues 805–951 (NPKFKDDWKL…YAYNLPRVRD (147 aa)) lie on the Cytoplasmic side of the membrane. Residue Ser920 is modified to Phosphoserine.

This sequence belongs to the G-protein coupled receptor 1 family.

It localises to the cell membrane. Its function is as follows. Receptor for R-spondins that potentiates the canonical Wnt signaling pathway and is involved in the formation of various organs. Upon binding to R-spondins (RSPO1, RSPO2, RSPO3 or RSPO4), associates with phosphorylated LRP6 and frizzled receptors that are activated by extracellular Wnt receptors, triggering the canonical Wnt signaling pathway to increase expression of target genes. In contrast to classical G-protein coupled receptors, does not activate heterotrimeric G-proteins to transduce the signal. Its function as activator of the Wnt signaling pathway is required for the development of various organs, including liver, kidney, intestine, bone, reproductive tract and eye. May also act as a receptor for norrin (NDP), such results however require additional confirmation in vivo. Required during spermatogenesis to activate the Wnt signaling pathway in peritubular myoid cells. Required for the maintenance of intestinal stem cells and Paneth cell differentiation in postnatal intestinal crypts. Acts as a regulator of bone formation and remodeling. Involved in kidney development; required for maintaining the ureteric bud in an undifferentiated state. Involved in the development of the anterior segment of the eye. Required during erythropoiesis. Also acts as a negative regulator of innate immunity by inhibiting TLR2/TLR4 associated pattern-recognition and pro-inflammatory cytokine production. Plays an important role in regulating the circadian rhythms of plasma lipids, partially through regulating the rhythmic expression of MTTP. Required for proper development of GnRH neurons (gonadotropin-releasing hormone expressing neurons) that control the release of reproductive hormones from the pituitary gland. This is Leucine-rich repeat-containing G-protein coupled receptor 4 (Lgr4) from Mus musculus (Mouse).